Here is a 588-residue protein sequence, read N- to C-terminus: DNA ligase (588 aa).

Glu248 contacts ATP. The active-site N6-AMP-lysine intermediate is Lys250. Residues Arg255, Arg270, Glu300, Phe341, Arg418, and Lys424 each contribute to the ATP site.

Belongs to the ATP-dependent DNA ligase family. Mg(2+) is required as a cofactor.

It carries out the reaction ATP + (deoxyribonucleotide)n-3'-hydroxyl + 5'-phospho-(deoxyribonucleotide)m = (deoxyribonucleotide)n+m + AMP + diphosphate.. Functionally, DNA ligase that seals nicks in double-stranded DNA during DNA replication, DNA recombination and DNA repair. This Thermoplasma volcanium (strain ATCC 51530 / DSM 4299 / JCM 9571 / NBRC 15438 / GSS1) protein is DNA ligase.